The chain runs to 261 residues: Phosphonates import ATP-binding protein PhnC (261 aa).

An ABC transporter domain is found at 15 to 257; that stretch reads LCLENTSAVY…LERSAIPPKR (243 aa). 48–55 contributes to the ATP binding site; that stretch reads GPSGSGKS.

It belongs to the ABC transporter superfamily. Phosphonates importer (TC 3.A.1.9.1) family. As to quaternary structure, the complex is composed of two ATP-binding proteins (PhnC), two transmembrane proteins (PhnE) and a solute-binding protein (PhnD).

The protein localises to the cell inner membrane. The enzyme catalyses phosphonate(out) + ATP + H2O = phosphonate(in) + ADP + phosphate + H(+). In terms of biological role, part of the ABC transporter complex PhnCDE involved in phosphonates import. Responsible for energy coupling to the transport system. The protein is Phosphonates import ATP-binding protein PhnC of Hyphomonas neptunium (strain ATCC 15444).